We begin with the raw amino-acid sequence, 124 residues long: MRHYEIVFIVHPDQSEQVPAMIERYKTTITTHGGQIHRVEDWGRRQLAYMIEKLAKAHYVCMNIECDQTTLDELEHAFKFNDAVLRHLIVKMKKAETGPSPMMKEVQREEAKKAAAAQPTEAQA.

Positions 96–124 (ETGPSPMMKEVQREEAKKAAAAQPTEAQA) are disordered. Positions 114–124 (AAAAQPTEAQA) are enriched in low complexity.

It belongs to the bacterial ribosomal protein bS6 family.

Its function is as follows. Binds together with bS18 to 16S ribosomal RNA. The polypeptide is Small ribosomal subunit protein bS6 (Burkholderia vietnamiensis (strain G4 / LMG 22486) (Burkholderia cepacia (strain R1808))).